The primary structure comprises 424 residues: D-inositol 3-phosphate glycosyltransferase (424 aa).

His-20 contacts 1D-myo-inositol 3-phosphate. Residues 26–27 (QP) and Gly-34 contribute to the UDP-N-acetyl-alpha-D-glucosamine site. 1D-myo-inositol 3-phosphate-binding positions include 31–36 (DAGGMN), Lys-89, Tyr-122, Thr-146, and Arg-166. UDP-N-acetyl-alpha-D-glucosamine is bound by residues Arg-240, Lys-245, and Met-306. Positions 315, 316, and 318 each coordinate Mg(2+). UDP-N-acetyl-alpha-D-glucosamine is bound by residues Glu-328 and Glu-336. Residue Thr-342 participates in Mg(2+) binding.

The protein belongs to the glycosyltransferase group 1 family. MshA subfamily. As to quaternary structure, homodimer.

The enzyme catalyses 1D-myo-inositol 3-phosphate + UDP-N-acetyl-alpha-D-glucosamine = 1D-myo-inositol 2-acetamido-2-deoxy-alpha-D-glucopyranoside 3-phosphate + UDP + H(+). Functionally, catalyzes the transfer of a N-acetyl-glucosamine moiety to 1D-myo-inositol 3-phosphate to produce 1D-myo-inositol 2-acetamido-2-deoxy-glucopyranoside 3-phosphate in the mycothiol biosynthesis pathway. The protein is D-inositol 3-phosphate glycosyltransferase of Kribbella flavida (strain DSM 17836 / JCM 10339 / NBRC 14399).